Here is a 509-residue protein sequence, read N- to C-terminus: Maturase K (509 aa).

It belongs to the intron maturase 2 family. MatK subfamily.

The protein localises to the plastid. Its subcellular location is the chloroplast. Its function is as follows. Usually encoded in the trnK tRNA gene intron. Probably assists in splicing its own and other chloroplast group II introns. The sequence is that of Maturase K from Solanum tuberosum (Potato).